We begin with the raw amino-acid sequence, 438 residues long: Minor capsid protein p49 (438 aa).

Residues 134–167 (PQVSGLKDTQKNCLTQPSSLPSLKNPKNSSVPST) form a disordered region. Residues 144–167 (KNCLTQPSSLPSLKNPKNSSVPST) are compositionally biased toward polar residues.

Belongs to the asfivirus p49 structural protein family.

It is found in the virion. Functionally, together with the penton and the other minor capsid proteins (M1249L, p17), forms a complicated network immediately below the outer capsid shell, stabilizing the whole capsid. Plays an essential role in the formation of infectious virus particles. Especially required for the formation of the capsid vertices. During virion assembly, associates with the membrane and probably mediates the docking of the penton complex to the inner membrane, where it recruits the capsomers to form the penton core. This is Minor capsid protein p49 from Ornithodoros (relapsing fever ticks).